The following is a 216-amino-acid chain: Octanoyltransferase (216 aa).

The BPL/LPL catalytic domain occupies 32–207 (ENSPDELWLV…TFSQLLGYEH (176 aa)). Substrate-binding positions include 71-78 (RGGQVTYH), 138-140 (SLG), and 151-153 (GLA). The Acyl-thioester intermediate role is filled by Cys-169.

It belongs to the LipB family.

The protein localises to the cytoplasm. The catalysed reaction is octanoyl-[ACP] + L-lysyl-[protein] = N(6)-octanoyl-L-lysyl-[protein] + holo-[ACP] + H(+). Its pathway is protein modification; protein lipoylation via endogenous pathway; protein N(6)-(lipoyl)lysine from octanoyl-[acyl-carrier-protein]: step 1/2. Functionally, catalyzes the transfer of endogenously produced octanoic acid from octanoyl-acyl-carrier-protein onto the lipoyl domains of lipoate-dependent enzymes. Lipoyl-ACP can also act as a substrate although octanoyl-ACP is likely to be the physiological substrate. The protein is Octanoyltransferase of Shewanella amazonensis (strain ATCC BAA-1098 / SB2B).